Here is a 290-residue protein sequence, read N- to C-terminus: 4-diphosphocytidyl-2-C-methyl-D-erythritol kinase (290 aa).

Lysine 11 is an active-site residue. 97 to 107 (PVAAGIGGGSS) serves as a coordination point for ATP. The active site involves aspartate 139.

The protein belongs to the GHMP kinase family. IspE subfamily.

It catalyses the reaction 4-CDP-2-C-methyl-D-erythritol + ATP = 4-CDP-2-C-methyl-D-erythritol 2-phosphate + ADP + H(+). Its pathway is isoprenoid biosynthesis; isopentenyl diphosphate biosynthesis via DXP pathway; isopentenyl diphosphate from 1-deoxy-D-xylulose 5-phosphate: step 3/6. In terms of biological role, catalyzes the phosphorylation of the position 2 hydroxy group of 4-diphosphocytidyl-2C-methyl-D-erythritol. This chain is 4-diphosphocytidyl-2-C-methyl-D-erythritol kinase, found in Methylobacterium radiotolerans (strain ATCC 27329 / DSM 1819 / JCM 2831 / NBRC 15690 / NCIMB 10815 / 0-1).